The following is a 199-amino-acid chain: Inducible T-cell costimulator (199 aa).

Residues 1–20 (MKSGLWYFFLFCLRIKVLTG) form the signal peptide. At 21-140 (EINGSANYEM…YESQLCCQLK (120 aa)) the chain is on the extracellular side. One can recognise an Ig-like V-type domain in the interval 30–132 (MFIFHNGGVQ…LTGGYLHIYE (103 aa)). Disulfide bonds link Cys42-Cys109 and Cys63-Cys83. Asn89 and Asn110 each carry an N-linked (GlcNAc...) asparagine glycan. A helical transmembrane segment spans residues 141–161 (FWLPIGCAAFVVVCILGCILI). The Cytoplasmic segment spans residues 162-199 (CWLTKKKYSSSVHDPNGEYMFMRAVNTAKKSRLTDVTL).

In terms of assembly, homodimer; disulfide-linked. Interacts with ICOSLG. Interacts with PIK3R1. Interacts with TBK1; this interaction is critical for the maturation of T follicular regulatory cells. Post-translationally, N-glycosylated. Activated T-cells. Highly expressed on tonsillar T-cells, which are closely associated with B-cells in the apical light zone of germinal centers, the site of terminal B-cell maturation. Expressed at lower levels in thymus, lung, lymph node and peripheral blood leukocytes. Expressed in the medulla of fetal and newborn thymus.

It is found in the cell membrane. Its subcellular location is the secreted. Stimulatory receptor expressed in activated or antigen-experienced T-cells that plays an important role in the immune response. Upon binding to its ligand ICOSL expressed on antigen presenting cells (APCs), delivers costimulatory signals that enhances all basic T-cell responses to a foreign antigen, namely proliferation, secretion of lymphokines including IL10, up-regulation of molecules that mediate cell-cell interaction, and effective help for antibody secretion by B-cells. Also acts as a costimulatory receptor critical for the differentiation of T follicular regulatory cells upon immune challenges such as viral infection. Mechanistically, potentiates TCR-induced calcium flux by augmenting PLCG1 activation and actin remodeling. In addition, activates PI3K signaling pathways independently of calcium flux. Essential both for efficient interaction between T and B-cells and for normal antibody responses to T-cell dependent antigens. Prevents the apoptosis of pre-activated T-cells. Plays a critical role in CD40-mediated class switching of immunoglobin isotypes. The protein is Inducible T-cell costimulator (ICOS) of Homo sapiens (Human).